The chain runs to 475 residues: D(1B) dopamine receptor (475 aa).

The Extracellular segment spans residues 1 to 38 (MLPPGRNRTAQPARLGLQRQLAQVDAPAGSATPLGPAQ). An N-linked (GlcNAc...) asparagine glycan is attached at N7. A helical membrane pass occupies residues 39 to 64 (VVTAGLLTLLIVWTLLGNVLVCAAIV). The Cytoplasmic portion of the chain corresponds to 65 to 75 (RSRHLRAKMTN). The chain crosses the membrane as a helical span at residues 76-102 (IFIVSLAVSDLFVALLVMPWKAVAEVA). Topologically, residues 103 to 111 (GYWPFGTFC) are extracellular. C111 and C211 form a disulfide bridge. Residues 112–134 (DIWVAFDIMCSTASILNLCIISV) form a helical membrane-spanning segment. Residues 135-153 (DRYWAISRPFRYERKMTQR) lie on the Cytoplasmic side of the membrane. Residues 154–179 (VALVMVGLAWTLSILISFIPVQLNWH) traverse the membrane as a helical segment. The Extracellular segment spans residues 180–215 (RDKAGSQGQEGLLSNGTPWEEGWELEGRTENCDSSL). The chain crosses the membrane as a helical span at residues 216-240 (NRTYAISSSLISFYIPVAIMIVTYT). The Cytoplasmic segment spans residues 241–289 (RIYRIAQVQIRRISSLERAAEHAQSCRSRGAYEPDPSLRASIKKETKVF). Residues 290–317 (KTLSMIMGVFVCCWLPFFILNCMVPFCS) form a helical membrane-spanning segment. Over 318-335 (SGDAEGPKTGFPCVSETT) the chain is Extracellular. A helical membrane pass occupies residues 336–357 (FDIFVWFGWANSSLNPIIYAFN). Residues 358–475 (ADFRKVFAQL…LTPNCFDKTA (118 aa)) lie on the Cytoplasmic side of the membrane. A lipid anchor (S-palmitoyl cysteine) is attached at C370. A disordered region spans residues 415–443 (SGDREVGEEEEEGPFDHMSQISPTTPDGD).

It belongs to the G-protein coupled receptor 1 family. Brain, in the lateral mammillary nuclei, the anterior pretectal nuclei, and several layers of the hippocampus.

Its subcellular location is the cell membrane. Its function is as follows. Dopamine receptor whose activity is mediated by G proteins which activate adenylyl cyclase. The protein is D(1B) dopamine receptor (Drd5) of Rattus norvegicus (Rat).